The chain runs to 365 residues: uncharacterized protein (365 aa).

This sequence belongs to the NAD(P)-dependent epimerase/dehydratase family.

The protein resides in the cytoplasm. It is found in the nucleus. This is an uncharacterized protein from Schizosaccharomyces pombe (strain 972 / ATCC 24843) (Fission yeast).